Reading from the N-terminus, the 205-residue chain is ATP synthase subunit b (205 aa).

Residues 51–69 (FAWRCLDFAVLLAIVVWAL) traverse the membrane as a helical segment.

This sequence belongs to the ATPase B chain family. As to quaternary structure, F-type ATPases have 2 components, F(1) - the catalytic core - and F(0) - the membrane proton channel. F(1) has five subunits: alpha(3), beta(3), gamma(1), delta(1), epsilon(1). F(0) has three main subunits: a(1), b(2) and c(10-14). The alpha and beta chains form an alternating ring which encloses part of the gamma chain. F(1) is attached to F(0) by a central stalk formed by the gamma and epsilon chains, while a peripheral stalk is formed by the delta and b chains.

The protein localises to the cell inner membrane. Functionally, f(1)F(0) ATP synthase produces ATP from ADP in the presence of a proton or sodium gradient. F-type ATPases consist of two structural domains, F(1) containing the extramembraneous catalytic core and F(0) containing the membrane proton channel, linked together by a central stalk and a peripheral stalk. During catalysis, ATP synthesis in the catalytic domain of F(1) is coupled via a rotary mechanism of the central stalk subunits to proton translocation. In terms of biological role, component of the F(0) channel, it forms part of the peripheral stalk, linking F(1) to F(0). The chain is ATP synthase subunit b from Geotalea uraniireducens (strain Rf4) (Geobacter uraniireducens).